The sequence spans 336 residues: tRNA N6-adenosine threonylcarbamoyltransferase (336 aa).

The Fe cation site is built by H112 and H116. Residues 136 to 140 (LVSGG), D169, G182, and N276 each bind substrate. D304 serves as a coordination point for Fe cation.

It belongs to the KAE1 / TsaD family. It depends on Fe(2+) as a cofactor.

It localises to the cytoplasm. It carries out the reaction L-threonylcarbamoyladenylate + adenosine(37) in tRNA = N(6)-L-threonylcarbamoyladenosine(37) in tRNA + AMP + H(+). Functionally, required for the formation of a threonylcarbamoyl group on adenosine at position 37 (t(6)A37) in tRNAs that read codons beginning with adenine. Is involved in the transfer of the threonylcarbamoyl moiety of threonylcarbamoyl-AMP (TC-AMP) to the N6 group of A37, together with TsaE and TsaB. TsaD likely plays a direct catalytic role in this reaction. The sequence is that of tRNA N6-adenosine threonylcarbamoyltransferase from Francisella tularensis subsp. tularensis (strain FSC 198).